The primary structure comprises 237 residues: Phosphoribosylaminoimidazole-succinocarboxamide synthase (237 aa).

It belongs to the SAICAR synthetase family.

It catalyses the reaction 5-amino-1-(5-phospho-D-ribosyl)imidazole-4-carboxylate + L-aspartate + ATP = (2S)-2-[5-amino-1-(5-phospho-beta-D-ribosyl)imidazole-4-carboxamido]succinate + ADP + phosphate + 2 H(+). It functions in the pathway purine metabolism; IMP biosynthesis via de novo pathway; 5-amino-1-(5-phospho-D-ribosyl)imidazole-4-carboxamide from 5-amino-1-(5-phospho-D-ribosyl)imidazole-4-carboxylate: step 1/2. In Pseudomonas fluorescens (strain ATCC BAA-477 / NRRL B-23932 / Pf-5), this protein is Phosphoribosylaminoimidazole-succinocarboxamide synthase.